A 1360-amino-acid chain; its full sequence is MAYSYTEKKRIRKDFGKLPNVMEVPYLLAIQLDSYRKFTQADRPADERLDIGLQAAFKSVFPIVSYSGNAALEYVSYALGKPVFDVSECVLRGATYAVPLRVKVRLIIYDRESSSKAIKDIKEQEVYMGEIPLMTDNGTFVINGTERVIVSQLHRSPGVFFEHDKGKTHSSGKLLYSARVIPYRGSWLDFEFDPKDLVYVRIDRRRKLPATILLRALGYSAEEMLDMFFETSRVFLAEDNIKLELVPSRLRGEVTTFEIKDADGNVIVEDGRRITARHIRQLEKSNVTELQVPAEYVLGKALANNVIDTNTGEVLFECNSEITEEVLEGLRSANVSEFQILYTNDLDCGPFLSDTLRTDPTRTELEALVEIYRMMRPGEPPTKESAEGLFQNLFFSNERYDLSAVGRMKFNRRLGRDEETGEGTLSREDIVDVLRTLISIRNGQGTVDDIDHLGNRRVRSVGEMAENQFRVGLVRVERAVKERLSMAESEGLMPQDLINAKPVAAAVKEFFGSSQLSQFMDQNNPLSEITHKRRVSALGPGGLTRERAGFEVRDVHPTHYGRVCPIETPEGPNIGLINSLATYARTNNYGFLESPHRKVVDGKVTDEIEYLSAINESQYVIAQASAATDGEGRLTDDLVSVRYQNEFTLKAAADVQYMDVSPRQVVSVAASLIPFLEHDDANRALMGSNMQRQAVPTLKADKPVVGTGMERNVARDSGVCVVAKRGGKIESVDAGRIVVRVADEETPAGDAGVDIYNLIKYTRSNQNTCINQRPIVGPGDSISRGDILADGPSVDLGELALGQNMRIAFMTWNGYNFEDSILVSERVVQEDRFTTIHIQELTCIARDTKLGSEEITADIPNVGEGALAKLDESGIVYVGAEVGAGDILVGKVTPKGETQLTPEEKLLRAIFGEKASDVKDTSLRVPSSVKGTVIDVQVFTRDGLEKDQRSLDIEKAQLDQVRKDLNEEYRIVEGATFARLRSSLVGNLASSGKGVKKGEAVTDEMLNAIDRDDWFKVRMADDALNEQLDLAEQQLVERRKELDERFEDKKRKLATGDDLAPGVLKIVKVYLAIKRRIQPGDKMAGRHGNKGVISVIMPVEDMPYDENGEPIDIVLNPLGVPSRMNVGQILETHLGLASKGLGRKIDNMVKQQREIAELRKFLGEIYNEIGQGYKIEDLDSFSDEEILELARNLRGGVPMATRAFDGAAESEIKALLKLADLPESGQMSLFDGRTGDAFMRPVTVGYMYMLKLNHLVDDKMHARSTGSYSLVTQQPLGGKAQFGGQRFGEMEVWALEAYGAAYTLQEMLTVKSDDVNGRTKMYKNIVDGDHRMEPGMPESFNVLVKEIRSLGINIELEQDS.

The protein belongs to the RNA polymerase beta chain family. The RNAP catalytic core consists of 2 alpha, 1 beta, 1 beta' and 1 omega subunit. When a sigma factor is associated with the core the holoenzyme is formed, which can initiate transcription.

The catalysed reaction is RNA(n) + a ribonucleoside 5'-triphosphate = RNA(n+1) + diphosphate. In terms of biological role, DNA-dependent RNA polymerase catalyzes the transcription of DNA into RNA using the four ribonucleoside triphosphates as substrates. This is DNA-directed RNA polymerase subunit beta from Teredinibacter turnerae (strain ATCC 39867 / T7901).